The primary structure comprises 36 residues: Potassium channel toxin alpha-KTx 2.7 (36 aa).

3 cysteine pairs are disulfide-bonded: Cys-7–Cys-29, Cys-13–Cys-34, and Cys-17–Cys-36.

This sequence belongs to the short scorpion toxin superfamily. Potassium channel inhibitor family. Alpha-KTx 02 subfamily. Expressed by the venom gland.

The protein resides in the secreted. Functionally, inhibitor of voltage-gated potassium channels (Kv). This protein is capable of displacing the binding of radio-labeled noxiustoxin (AC P08815) to rat brain synaptosomes with high affinity (about 100 pM). It is also capable of inhibiting transient potassium-currents (resembling I(A)-type currents), in cultured rat cerebellar granule cells. About 50% of the peak currents are reduced by application of a 1.5 uM solution of this toxin. Is lethal to mice (when less than 100 ug are injected). This is Potassium channel toxin alpha-KTx 2.7 from Centruroides limpidus (Mexican scorpion).